Here is a 618-residue protein sequence, read N- to C-terminus: 1-deoxy-D-xylulose-5-phosphate synthase (618 aa).

Residues His75 and 116–118 (GHS) contribute to the thiamine diphosphate site. Asp147 provides a ligand contact to Mg(2+). Thiamine diphosphate contacts are provided by residues 148-149 (GA), Asn176, Tyr283, and Glu364. Asn176 is a Mg(2+) binding site.

It belongs to the transketolase family. DXPS subfamily. Homodimer. Requires Mg(2+) as cofactor. The cofactor is thiamine diphosphate.

The enzyme catalyses D-glyceraldehyde 3-phosphate + pyruvate + H(+) = 1-deoxy-D-xylulose 5-phosphate + CO2. Its pathway is metabolic intermediate biosynthesis; 1-deoxy-D-xylulose 5-phosphate biosynthesis; 1-deoxy-D-xylulose 5-phosphate from D-glyceraldehyde 3-phosphate and pyruvate: step 1/1. Functionally, catalyzes the acyloin condensation reaction between C atoms 2 and 3 of pyruvate and glyceraldehyde 3-phosphate to yield 1-deoxy-D-xylulose-5-phosphate (DXP). This is 1-deoxy-D-xylulose-5-phosphate synthase from Thiobacillus denitrificans (strain ATCC 25259 / T1).